Here is a 1273-residue protein sequence, read N- to C-terminus: Paired amphipathic helix protein Sin3a (1273 aa).

Disordered stretches follow at residues 1–23 (MKRRLDDQESPVYAAQQRRIPGS) and 87–110 (HPTAVQPHGGQVVQSHAHPAPPVA). At serine 10 the chain carries Phosphoserine. Positions 119–189 (QRLKVEDALS…MGFNTFLPPG (71 aa)) constitute a PAH 1 domain. The interaction with HCFC1 stretch occupies residues 119–196 (QRLKVEDALS…PPGYKIEVQT (78 aa)). Glycyl lysine isopeptide (Lys-Gly) (interchain with G-Cter in SUMO2) cross-links involve residues lysine 122 and lysine 134. A disordered region spans residues 205–297 (PGQVHQIPTH…ISLGTAPSLQ (93 aa)). The tract at residues 205–480 (PGQVHQIPTH…RKALRSAEAY (276 aa)) is interaction with REST. Over residues 228–237 (SQPSAQSAPA) the composition is skewed to low complexity. Residues 238-248 (PAQPAPQPPPA) show a composition bias toward pro residues. Polar residues predominate over residues 252–266 (KPSQLQAHTPASQQT). The span at 267–282 (PPLPPYASPRSPPVQP) shows a compositional bias: pro residues. Serine 277 is modified (phosphoserine). Threonine 284 is subject to Phosphothreonine. A compositionally biased stretch (polar residues) spans 284–297 (TPVTISLGTAPSLQ). A PAH 2 domain is found at 300 to 383 (QPVEFNHAIN…SEFGQFLPDA (84 aa)). The tract at residues 398-446 (DSVRNDHGGTVKKPQLNNKPQRPSQNGCQIRRHPTGTTPPVKKKPKLLN) is disordered. A compositionally biased stretch (polar residues) spans 412–425 (QLNNKPQRPSQNGC). In terms of domain architecture, PAH 3 spans 456–525 (SKHGGGTESL…NWFKNFLGYK (70 aa)). The segment at 458 to 525 (HGGGTESLFF…NWFKNFLGYK (68 aa)) is interaction with SAP30. Position 469 is an N6-acetyllysine (lysine 469). An interaction with NCOR1 region spans residues 523-850 (GYKESVHLET…EMDVDEATGA (328 aa)). The interval 524-659 (YKESVHLETY…KFRLDNTLGG (136 aa)) is interaction with SUDS3 and SAP130. Residue lysine 563 forms a Glycyl lysine isopeptide (Lys-Gly) (interchain with G-Cter in SUMO2) linkage. Residues 687-829 (NPSIAVPIVL…IPDLLFAQRG (143 aa)) are interaction with HDAC1 and ARID4B. 2 positions are modified to phosphoserine: serine 832 and serine 860. Residues lysine 865 and lysine 875 each carry the N6-acetyllysine modification. The tract at residues 888–967 (VNNNWYIFMR…YYPAFLDMVR (80 aa)) is interaction with OGT. Residues 903–932 (CLRLLRICSQAERQIEEENREREWEREVLG) adopt a coiled-coil conformation. Residues serine 940, serine 1089, and serine 1112 each carry the phosphoserine modification. Positions 1136 to 1156 (CQRGREQQEKEGKEGNSKKTM) are disordered. Over residues 1138–1156 (RGREQQEKEGKEGNSKKTM) the composition is skewed to basic and acidic residues.

In terms of assembly, interacts with ARID4B, BRMS1L, HCFC1, HDAC1, HDAC2, MXI1, SAP30L, SAP130, SFPQ and TOPORS. Interacts with OGT (via TPRs 1-6); the interaction mediates transcriptional repression in parallel with histone deacetylase. Interacts with BAZ2A, MXD1, MXD3, MXD4, MBD2, DACH1, NCOR1, NR4A2, REST, RLIM, SAP30, SETDB1, SMYD2, and SUDS3. Interacts with PHF12 in a complex composed of HDAC1, PHF12 and SAP30. Interacts with TET1; the interaction recruits SIN3A to gene promoters. The large PER complex involved in the histone deacetylation is composed of at least HDAC1, PER2, SFPQ and SIN3A. Interacts with KLF11. Interacts with PPHLN1. Found in a complex with YY1, GON4L and HDAC1. Interacts (via PAH2) with FOXK1. Interacts with FOXK2. Found in a complex composed of at least SINHCAF, SIN3A, HDAC1, SAP30, RBBP4, OGT and TET1. Interacts with SINHCAF. Interacts with SPHK2. SUMO1 sumoylated by TOPORS. Probably desumoylated by SENP2. Expressed in the developing brain, with highest levels of expression detected in the ventricular zone of various cortical regions.

It localises to the nucleus. It is found in the nucleolus. In terms of biological role, acts as a transcriptional repressor. Corepressor for REST. Interacts with MXI1 to repress MYC responsive genes and antagonize MYC oncogenic activities. Also interacts with MXD1-MAX heterodimers to repress transcription by tethering SIN3A to DNA. Acts cooperatively with OGT to repress transcription in parallel with histone deacetylation. Involved in the control of the circadian rhythms. Required for the transcriptional repression of circadian target genes, such as PER1, mediated by the large PER complex through histone deacetylation. Cooperates with FOXK1 to regulate cell cycle progression probably by repressing cell cycle inhibitor genes expression. Required for cortical neuron differentiation and callosal axon elongation. The protein is Paired amphipathic helix protein Sin3a of Homo sapiens (Human).